The primary structure comprises 230 residues: Ureidoacrylate amidohydrolase RutB (230 aa).

Aspartate 24 serves as the catalytic Proton acceptor. Residue lysine 133 is part of the active site. Residue cysteine 166 is the Nucleophile of the active site.

It belongs to the isochorismatase family. RutB subfamily.

The enzyme catalyses (Z)-3-ureidoacrylate + H2O + H(+) = (Z)-3-aminoacrylate + NH4(+) + CO2. It carries out the reaction (Z)-3-ureidoacrylate + H2O = (Z)-3-aminoacrylate + carbamate + H(+). It catalyses the reaction (Z)-2-methylureidoacrylate + H2O + H(+) = (Z)-2-methylaminoacrylate + NH4(+) + CO2. Hydrolyzes ureidoacrylate to form aminoacrylate and carbamate. The carbamate hydrolyzes spontaneously, thereby releasing one of the nitrogen atoms of the pyrimidine ring as ammonia and one of its carbon atoms as CO2. In Escherichia coli O111:H- (strain 11128 / EHEC), this protein is Ureidoacrylate amidohydrolase RutB.